The sequence spans 394 residues: p-hydroxybenzoate hydroxylase (394 aa).

Residues S13, E32, 42–47 (RIRAGV), and Q102 contribute to the FAD site. Substrate is bound by residues Y201, 212–214 (SQR), and Y222. D286 contributes to the FAD binding site. Residue P293 participates in substrate binding. 299–300 (LN) provides a ligand contact to FAD.

Belongs to the aromatic-ring hydroxylase family. As to quaternary structure, homodimer. FAD serves as cofactor.

The catalysed reaction is 4-hydroxybenzoate + NADPH + O2 + H(+) = 3,4-dihydroxybenzoate + NADP(+) + H2O. The protein operates within aromatic compound metabolism; benzoate degradation via hydroxylation; 3,4-dihydroxybenzoate from benzoate: step 2/2. In terms of biological role, catalyzes the incorporation of an atom of dioxygen into p-hydroxybenzoate (p-OHB) to form 3,4-dihydroxybenzoate (3,4DOHB). The reaction occurs in two parts: reduction of the flavin adenine dinucleotide (FAD) in the enzyme by reduced nicotinamide adenine dinucleotide phosphate (NADPH) in response to binding p-hydroxybenzoate to the enzyme and oxidation of reduced FAD with oxygen to form a hydroperoxide, which then oxygenates p-hydroxybenzoate. The sequence is that of p-hydroxybenzoate hydroxylase from Pseudomonas aeruginosa (strain ATCC 15692 / DSM 22644 / CIP 104116 / JCM 14847 / LMG 12228 / 1C / PRS 101 / PAO1).